The sequence spans 459 residues: cAMP-dependent protein kinase regulatory subunit (459 aa).

The dimerization and phosphorylation stretch occupies residues 30–219; sequence QFCANYFNTK…TLANNLKNNF (190 aa). Disordered regions lie at residues 78–109 and 125–168; these read VNDRQPSFKSPFGVNDPHSNHDEDPHAKDTKT and FDVK…PSSK. Basic and acidic residues predominate over residues 95–109; sequence HSNHDEDPHAKDTKT. Residues 146–168 show a composition bias toward low complexity; the sequence is KPSSSSQPNQQSASASSKTPSSK. Serine 180 carries the post-translational modification Phosphoserine. Residues 220-335, glutamate 285, arginine 294, 338-454, glutamate 404, and arginine 413 contribute to the 3',5'-cyclic AMP site; these read LFKQ…FLKD and VLKS…KSQD.

Belongs to the cAMP-dependent kinase regulatory chain family. Tetramer, composed of 2 regulatory (R) and 2 catalytic (C) subunits. In the presence of cAMP it dissociates into 2 active monomeric C subunits and an R dimer.

This Candida albicans (strain SC5314 / ATCC MYA-2876) (Yeast) protein is cAMP-dependent protein kinase regulatory subunit (BCY1).